A 208-amino-acid polypeptide reads, in one-letter code: Outer-membrane lipoprotein carrier protein (208 aa).

The signal sequence occupies residues 1–22 (MKKIFTIAALSLPLFCHLPAMA).

The protein belongs to the LolA family. As to quaternary structure, monomer.

The protein resides in the periplasm. Its function is as follows. Participates in the translocation of lipoproteins from the inner membrane to the outer membrane. Only forms a complex with a lipoprotein if the residue after the N-terminal Cys is not an aspartate (The Asp acts as a targeting signal to indicate that the lipoprotein should stay in the inner membrane). This is Outer-membrane lipoprotein carrier protein from Shewanella pealeana (strain ATCC 700345 / ANG-SQ1).